The chain runs to 909 residues: Alanine--tRNA ligase (909 aa).

Positions 600, 604, 704, and 708 each coordinate Zn(2+).

It belongs to the class-II aminoacyl-tRNA synthetase family. Requires Zn(2+) as cofactor.

The protein localises to the cytoplasm. The catalysed reaction is tRNA(Ala) + L-alanine + ATP = L-alanyl-tRNA(Ala) + AMP + diphosphate. In terms of biological role, catalyzes the attachment of alanine to tRNA(Ala) in a two-step reaction: alanine is first activated by ATP to form Ala-AMP and then transferred to the acceptor end of tRNA(Ala). Also edits incorrectly charged Ser-tRNA(Ala) and Gly-tRNA(Ala) via its editing domain. In Staphylothermus marinus (strain ATCC 43588 / DSM 3639 / JCM 9404 / F1), this protein is Alanine--tRNA ligase.